The primary structure comprises 350 residues: Uroporphyrinogen decarboxylase (350 aa).

Substrate-binding positions include 27-31 (RQAGR), F46, D76, Y152, S207, and H321.

Belongs to the uroporphyrinogen decarboxylase family. Homodimer.

It localises to the cytoplasm. It catalyses the reaction uroporphyrinogen III + 4 H(+) = coproporphyrinogen III + 4 CO2. It participates in porphyrin-containing compound metabolism; protoporphyrin-IX biosynthesis; coproporphyrinogen-III from 5-aminolevulinate: step 4/4. Catalyzes the decarboxylation of four acetate groups of uroporphyrinogen-III to yield coproporphyrinogen-III. The protein is Uroporphyrinogen decarboxylase of Listeria innocua serovar 6a (strain ATCC BAA-680 / CLIP 11262).